A 327-amino-acid polypeptide reads, in one-letter code: Leucotoxin LukD (327 aa).

An N-terminal signal peptide occupies residues 1-26 (MKIEKLGKSSVASSIALLLLSNTVDA).

The protein belongs to the aerolysin family. As to quaternary structure, toxicity requires sequential binding and synergistic association of a class S and a class F component which form heterooligomeric complexes. LukE (class S) associates with LukD (class F). LukD can also associate with HlgA.

It localises to the secreted. In terms of biological role, part of a bi-component leucotoxin that acts by forming pores in the membrane of the target cells. LukE-LukD is as effective as the Panton-Valentine leucocidin (PVL) for inducing dermonecrosis when injected in the rabbit skin, but not hemolytic and poorly leucotoxic on human blood cells compared to other leucotoxins expressed by S.aureus. HlgA-LukD is a Ca(2+) channel inducer. The sequence is that of Leucotoxin LukD (lukD) from Staphylococcus aureus.